A 444-amino-acid chain; its full sequence is Alpha-N-acetylgalactosaminidase (444 aa).

Residues Leu30 to Arg31, Asp52, Asn80, Trp101 to His104, His107, Glu121 to Val122, and Asn150 contribute to the NAD(+) site. Tyr179 contributes to the substrate binding site. Residue Ser208–Trp212 participates in NAD(+) binding. Residues Arg213, Tyr225–His228, and Tyr307 each bind substrate. An NAD(+)-binding site is contributed by Tyr225.

The protein belongs to the Gfo/Idh/MocA family. Glycosyl hydrolase 109 subfamily. NAD(+) serves as cofactor.

It catalyses the reaction Cleavage of non-reducing alpha-(1-&gt;3)-N-acetylgalactosamine residues from human blood group A and AB mucin glycoproteins, Forssman hapten and blood group A lacto series glycolipids.. Glycosidase that has specific alpha-N-acetylgalactosaminidase activity. This Elizabethkingia meningoseptica (Chryseobacterium meningosepticum) protein is Alpha-N-acetylgalactosaminidase (nagA).